The primary structure comprises 426 residues: Glutamyl-tRNA reductase (426 aa).

Substrate-binding positions include 49 to 52 (TCNR), S110, 115 to 117 (EAQ), and Q121. The active-site Nucleophile is C50. Position 191–196 (191–196 (GAGEMA)) interacts with NADP(+).

Belongs to the glutamyl-tRNA reductase family. In terms of assembly, homodimer.

It carries out the reaction (S)-4-amino-5-oxopentanoate + tRNA(Glu) + NADP(+) = L-glutamyl-tRNA(Glu) + NADPH + H(+). The protein operates within porphyrin-containing compound metabolism; protoporphyrin-IX biosynthesis; 5-aminolevulinate from L-glutamyl-tRNA(Glu): step 1/2. In terms of biological role, catalyzes the NADPH-dependent reduction of glutamyl-tRNA(Glu) to glutamate 1-semialdehyde (GSA). In Rhodopirellula baltica (strain DSM 10527 / NCIMB 13988 / SH1), this protein is Glutamyl-tRNA reductase.